Reading from the N-terminus, the 237-residue chain is Ribonuclease 3 (237 aa).

Residues leucine 4–glycine 133 enclose the RNase III domain. Glutamate 46 provides a ligand contact to Mg(2+). Residues aspartate 50 and glutamate 122 contribute to the active site. Glutamate 122 contacts Mg(2+). The DRBM domain maps to aspartate 160 to asparagine 229.

Belongs to the ribonuclease III family. As to quaternary structure, homodimer. It depends on Mg(2+) as a cofactor.

It localises to the cytoplasm. It catalyses the reaction Endonucleolytic cleavage to 5'-phosphomonoester.. In terms of biological role, digests double-stranded RNA. Involved in the processing of primary rRNA transcript to yield the immediate precursors to the large and small rRNAs (23S and 16S). Processes some mRNAs, and tRNAs when they are encoded in the rRNA operon. Processes pre-crRNA and tracrRNA of type II CRISPR loci if present in the organism. The chain is Ribonuclease 3 from Dehalococcoides mccartyi (strain ATCC BAA-2266 / KCTC 15142 / 195) (Dehalococcoides ethenogenes (strain 195)).